The primary structure comprises 309 residues: Ribonuclease Z (309 aa).

The Zn(2+) site is built by His-63, His-65, Asp-67, His-68, His-143, Asp-213, and His-271. Catalysis depends on Asp-67, which acts as the Proton acceptor.

It belongs to the RNase Z family. As to quaternary structure, homodimer. Zn(2+) serves as cofactor.

The enzyme catalyses Endonucleolytic cleavage of RNA, removing extra 3' nucleotides from tRNA precursor, generating 3' termini of tRNAs. A 3'-hydroxy group is left at the tRNA terminus and a 5'-phosphoryl group is left at the trailer molecule.. Functionally, zinc phosphodiesterase, which displays some tRNA 3'-processing endonuclease activity. Probably involved in tRNA maturation, by removing a 3'-trailer from precursor tRNA. The sequence is that of Ribonuclease Z from Phocaeicola vulgatus (strain ATCC 8482 / DSM 1447 / JCM 5826 / CCUG 4940 / NBRC 14291 / NCTC 11154) (Bacteroides vulgatus).